Here is a 1076-residue protein sequence, read N- to C-terminus: Atos homolog protein A (1076 aa).

The transactivation domain 1 (TAD1) stretch occupies residues 24-32 (ALLITEGRT). 2 disordered regions span residues 700–721 (ESMS…TQLN) and 739–765 (SDQL…QRRS). Over residues 739–754 (SDQLKNEQDKQEDPTN) the composition is skewed to basic and acidic residues. The required for macropage invasion stretch occupies residues 878–935 (LLGNFEESVLNYRFDPLGIVDGFTAEVGASGAFCPTHLTLPVEVSFYSVSDDNAPSPY). The tract at residues 962-970 (FNPNKTVVK) is transactivation domain 2 (TAD2).

Belongs to the ATOS family.

The protein localises to the nucleus. Its function is as follows. Transcription regulator that syncronizes transcriptional and translational programs to promote macrophage invasion of tissues. The sequence is that of Atos homolog protein A from Homo sapiens (Human).